The primary structure comprises 478 residues: Protein nucleotidyltransferase YdiU (478 aa).

Gly84, Gly86, Arg87, Lys107, Asp119, Gly120, Arg170, and Arg177 together coordinate ATP. Asp246 serves as the catalytic Proton acceptor. Residues Asn247 and Asp256 each coordinate Mg(2+). Asp256 is an ATP binding site.

The protein belongs to the SELO family. Requires Mg(2+) as cofactor. It depends on Mn(2+) as a cofactor.

The catalysed reaction is L-seryl-[protein] + ATP = 3-O-(5'-adenylyl)-L-seryl-[protein] + diphosphate. It carries out the reaction L-threonyl-[protein] + ATP = 3-O-(5'-adenylyl)-L-threonyl-[protein] + diphosphate. The enzyme catalyses L-tyrosyl-[protein] + ATP = O-(5'-adenylyl)-L-tyrosyl-[protein] + diphosphate. It catalyses the reaction L-histidyl-[protein] + UTP = N(tele)-(5'-uridylyl)-L-histidyl-[protein] + diphosphate. The catalysed reaction is L-seryl-[protein] + UTP = O-(5'-uridylyl)-L-seryl-[protein] + diphosphate. It carries out the reaction L-tyrosyl-[protein] + UTP = O-(5'-uridylyl)-L-tyrosyl-[protein] + diphosphate. In terms of biological role, nucleotidyltransferase involved in the post-translational modification of proteins. It can catalyze the addition of adenosine monophosphate (AMP) or uridine monophosphate (UMP) to a protein, resulting in modifications known as AMPylation and UMPylation. The polypeptide is Protein nucleotidyltransferase YdiU (Escherichia coli O81 (strain ED1a)).